The sequence spans 29 residues: Glucagon (29 aa).

The protein belongs to the glucagon family.

The protein localises to the secreted. Glucagon plays a key role in glucose metabolism and homeostasis. Regulates blood glucose by increasing gluconeogenesis and decreasing glycolysis. The polypeptide is Glucagon (gcg) (Lampetra fluviatilis (European river lamprey)).